A 357-amino-acid polypeptide reads, in one-letter code: GTPase Obg (357 aa).

In terms of domain architecture, Obg spans 1-159 (MKFVDEAFID…RNLKLELKVL (159 aa)). In terms of domain architecture, OBG-type G spans 160-334 (ADVGLLGMPN…LIQAIYQHVR (175 aa)). Residues 166–173 (GMPNAGKS), 191–195 (FTTLH), 213–216 (DIPG), 284–287 (NKLD), and 315–317 (SAL) each bind GTP. Mg(2+) is bound by residues Ser-173 and Thr-193.

It belongs to the TRAFAC class OBG-HflX-like GTPase superfamily. OBG GTPase family. Monomer. The cofactor is Mg(2+).

It localises to the cytoplasm. An essential GTPase which binds GTP, GDP and possibly (p)ppGpp with moderate affinity, with high nucleotide exchange rates and a fairly low GTP hydrolysis rate. Plays a role in control of the cell cycle, stress response, ribosome biogenesis and in those bacteria that undergo differentiation, in morphogenesis control. This is GTPase Obg from Paracidovorax citrulli (strain AAC00-1) (Acidovorax citrulli).